The sequence spans 183 residues: MTGRGIPGAVAVHHVAYTVPDLDQAVEFFTEVIGAELAYTLVQDAAGDWMTRKLDVDATATARIAMLRLGPVTNLELFEYAAPDQRRQLPRNSDWGGHHLAIHVADVDAAAEYLRAQPGVRVLGDPETITDGPIAGDRWVYFATPWGMQLELINLPAGAPFEQQTEVRLYQPEGSWSDHRGAS.

The VOC domain occupies 11–155 (AVHHVAYTVP…WGMQLELINL (145 aa)). Residues His-14, Glu-76, His-99, and Glu-151 each coordinate a divalent metal cation.

In terms of assembly, homodimer. It depends on a divalent metal cation as a cofactor.

The catalysed reaction is 2-epi-5-epi-valiolone = 5-epi-valiolone. It participates in antibiotic biosynthesis. Catalyzes the epimerization of 2-epi-5-epi-valiolone to 5-epi-valiolone. Involved in cetoniacytone A biosynthesis. The protein is 2-epi-5-epi-valiolone epimerase of Actinomyces sp.